Reading from the N-terminus, the 665-residue chain is UvrABC system protein B (665 aa).

In terms of domain architecture, Helicase ATP-binding spans 25–176 (NSIEKGNRFQ…NQRQLLRDLV (152 aa)). 38–45 (GATGTGKT) contributes to the ATP binding site. Positions 91-114 (YYDYYQPEAYIPVSDTYIEKSASI) match the Beta-hairpin motif. In terms of domain architecture, Helicase C-terminal spans 429–595 (QVDDLLGEIK…PIVTRSSNAI (167 aa)). Residues 626-661 (PELIGQLEEQMKEAAKKLEFEEAAKYRDRIQHLRDK) enclose the UVR domain.

It belongs to the UvrB family. As to quaternary structure, forms a heterotetramer with UvrA during the search for lesions. Interacts with UvrC in an incision complex.

The protein localises to the cytoplasm. Functionally, the UvrABC repair system catalyzes the recognition and processing of DNA lesions. A damage recognition complex composed of 2 UvrA and 2 UvrB subunits scans DNA for abnormalities. Upon binding of the UvrA(2)B(2) complex to a putative damaged site, the DNA wraps around one UvrB monomer. DNA wrap is dependent on ATP binding by UvrB and probably causes local melting of the DNA helix, facilitating insertion of UvrB beta-hairpin between the DNA strands. Then UvrB probes one DNA strand for the presence of a lesion. If a lesion is found the UvrA subunits dissociate and the UvrB-DNA preincision complex is formed. This complex is subsequently bound by UvrC and the second UvrB is released. If no lesion is found, the DNA wraps around the other UvrB subunit that will check the other stand for damage. The sequence is that of UvrABC system protein B from Gloeothece citriformis (strain PCC 7424) (Cyanothece sp. (strain PCC 7424)).